The sequence spans 177 residues: Large ribosomal subunit protein uL16 (177 aa).

It belongs to the universal ribosomal protein uL16 family. As to quaternary structure, part of the 50S ribosomal subunit. Weakly binds 5S rRNA. Probably binds the A and P site tRNAs.

Its function is as follows. This is 1 of 5 proteins that mediate the attachment of the 5S rRNA onto the large ribosomal subunit, stabilizing the orientation of adjacent RNA domains. Modeling places the A and P site tRNAs in close proximity to this protein. The polypeptide is Large ribosomal subunit protein uL16 (Haloarcula marismortui (strain ATCC 43049 / DSM 3752 / JCM 8966 / VKM B-1809) (Halobacterium marismortui)).